The chain runs to 290 residues: Multiple sugar-binding transport system permease protein MsmF (290 aa).

7 helical membrane passes run 12–32, 72–92, 104–124, 156–176, 201–221, 231–253, and 260–280; these read GWTF…FPMF, FTLV…IIIA, FFRA…SLIF, VIAS…ILFL, FWSV…IMAL, IFAL…VYNY, and YGYA…VSVL. The 212-residue stretch at 70-281 folds into the ABC transmembrane type-1 domain; it reads IGFTLVLTLA…IIIGIVSVLQ (212 aa).

Belongs to the binding-protein-dependent transport system permease family. MalFG subfamily.

The protein localises to the cell membrane. Involved in a binding protein-dependent transport system responsible for the uptake of melibiose, raffinose and isomaltotriose. This Streptococcus mutans serotype c (strain ATCC 700610 / UA159) protein is Multiple sugar-binding transport system permease protein MsmF (msmF).